The primary structure comprises 404 residues: Intracellular hyaluronan-binding protein 4.L (404 aa).

3 disordered regions span residues 1 to 21, 51 to 288, and 359 to 379; these read MRLD…MQDN, LTRR…QEMS, and LTRP…REEA. Residues 8–19 show a composition bias toward polar residues; that stretch reads ETPSSPVNTEMQ. Composition is skewed to basic and acidic residues over residues 71–81, 145–159, and 165–184; these read GKKESQKDRKA, KVDR…REVR, and RSNE…DKQM. Residues 188–200 are compositionally biased toward gly residues; it reads GGRGGMRGRGRGG. Composition is skewed to basic and acidic residues over residues 205–233 and 270–281; these read TEND…DKRG and EEHAKVPEEKNE.

This sequence belongs to the SERBP1-HABP4 family. Associates with ribosomes; promoting ribosome stabilization. Interacts with eef2/eEF2; promoting ribosome stabilization.

It localises to the nucleus. The protein localises to the cytoplasm. It is found in the stress granule. Its subcellular location is the nucleolus. The protein resides in the nucleus speckle. It localises to the cajal body. In terms of biological role, ribosome-binding protein that promotes ribosome hibernation, a process during which ribosomes are stabilized in an inactive state and preserved from proteasomal degradation. Acts via its association with eef2/eEF2 factor at the A-site of the ribosome, promoting ribosome stabilization in an inactive state compatible with storage. Plays a key role in ribosome hibernation in the mature egg by promoting ribosome stabilization. Ribosomes, which are produced in large quantities during oogenesis, are stored and translationally repressed in the egg and early embryo. This chain is Intracellular hyaluronan-binding protein 4.L, found in Xenopus laevis (African clawed frog).